Reading from the N-terminus, the 629-residue chain is tRNA uridine 5-carboxymethylaminomethyl modification enzyme MnmG (629 aa).

FAD contacts are provided by residues 13–18 (GGGHAG), Val-125, and Ser-180. 273–287 (GPRYCPSIEDKIHRF) serves as a coordination point for NAD(+). Residue Gln-370 coordinates FAD.

It belongs to the MnmG family. Homodimer. Heterotetramer of two MnmE and two MnmG subunits. FAD is required as a cofactor.

Its subcellular location is the cytoplasm. Its function is as follows. NAD-binding protein involved in the addition of a carboxymethylaminomethyl (cmnm) group at the wobble position (U34) of certain tRNAs, forming tRNA-cmnm(5)s(2)U34. The polypeptide is tRNA uridine 5-carboxymethylaminomethyl modification enzyme MnmG (Shewanella oneidensis (strain ATCC 700550 / JCM 31522 / CIP 106686 / LMG 19005 / NCIMB 14063 / MR-1)).